The chain runs to 663 residues: Transforming growth factor beta activator LRRC32 (663 aa).

An N-terminal signal peptide occupies residues 1-17 (MSHQILLLLAMLTLGLA). The Extracellular segment spans residues 18–628 (ISQRREQVPC…CEKGGLKNVN (611 aa)). Residues 22–49 (REQVPCRTVNKEALCHGLGLLQVPSVLS) form the LRRNT domain. LRR repeat units lie at residues 49-72 (SLDI…PLGF), 73-96 (YTAL…VFQA), 98-123 (PYLE…GLGR), 125-148 (PLLV…LLGE), 149-172 (TPRL…TFWG), 174-196 (PAVE…AFEA), 197-220 (LPHL…SLQQ), 222-241 (QVLD…PEPQ), 243-267 (QFQL…VFPR), and 269-287 (IYLN…LPRG). Residue N204 is glycosylated (N-linked (GlcNAc...) asparagine). N272, N305, and N309 each carry an N-linked (GlcNAc...) asparagine glycan. Residues 291–311 (LHAPSEGWSASPLSNPSRNAS) are disordered. Polar residues predominate over residues 301-311 (SPLSNPSRNAS). LRR repeat units follow at residues 315-338 (LSQL…FLEH), 340-362 (TSLR…QVDS), 363-386 (LPCL…TKVL), 387-409 (GSLQ…TFAS), 411-433 (ASLQ…AEPG), 443-466 (IPTL…SFLH), 468-489 (PLTE…ALVG), 491-514 (EASL…LPCF), 515-539 (LRLK…AVSL), 541-559 (VLDL…AMGG), and 561-584 (ETSL…WLAA). N346 carries an N-linked (GlcNAc...) asparagine glycan. The N-linked (GlcNAc...) asparagine glycan is linked to N546. Positions 572-621 (NPLSCCGNGWLAAQLHQGRVDVDATQDLICRFGSQEELSLSLVRPEDCEK) constitute an LRRCT domain. The chain crosses the membrane as a helical span at residues 629–649 (LILLLSFTLVSAIVLTTLATI). The Cytoplasmic portion of the chain corresponds to 650 to 663 (CFLRRQKLSQQYKA).

This sequence belongs to the LRRC32/LRRC33 family. In terms of assembly, interacts with TGFB1; associates via disulfide bonds with the Latency-associated peptide chain (LAP) regulatory chain of TGFB1, leading to regulate activation of TGF-beta-1. Interacts with TGFB2. Interacts with TGFB3; associates via disulfide bonds with the Latency-associated peptide chain (LAP) regulatory chain of TGFB3, leading to regulate activation of TGF-beta-3. Interacts with LAPTM4B; decreases TGFB1 production in regulatory T-cells. Present in medial edge epithelial cells at 14.5 dpc (at protein level).

The protein resides in the cell membrane. It is found in the cell surface. Functionally, key regulator of transforming growth factor beta (TGFB1, TGFB2 and TGFB3) that controls TGF-beta activation by maintaining it in a latent state during storage in extracellular space. Associates specifically via disulfide bonds with the Latency-associated peptide (LAP), which is the regulatory chain of TGF-beta, and regulates integrin-dependent activation of TGF-beta. Able to outcompete LTBP1 for binding to LAP regulatory chain of TGF-beta. Controls activation of TGF-beta-1 (TGFB1) on the surface of activated regulatory T-cells (Tregs). Required for epithelial fusion during palate development by regulating activation of TGF-beta-3 (TGFB3). The protein is Transforming growth factor beta activator LRRC32 of Mus musculus (Mouse).